The following is a 338-amino-acid chain: UPF0324 membrane protein TauZ (338 aa).

The next 9 helical transmembrane spans lie at 36–55 (YGAP…NFLA), 75–92 (LGVA…LAAL), 96–118 (AIAL…SRLV), 125–147 (ALLT…AAVL), 162–184 (LSVT…LFGF), 223–245 (LIRV…ARGL), 255–277 (PLLP…GLIP), 290–309 (WALL…GKML), and 314–336 (GAIA…GLHL).

The protein belongs to the UPF0324 family.

It localises to the cell membrane. The sequence is that of UPF0324 membrane protein TauZ (tauZ) from Paracoccus pantotrophus (Thiosphaera pantotropha).